The following is a 309-amino-acid chain: MAASMRMYRAVGALGLASILNPARMAAPVLVMPTRTKKRYFIPPAVGAKHKTMADMISKARAAGVVTPHETMERPINIACTAGIFDPYIPPEGDARLSSLSKEGLKQRTQQLKQTAASQLAIRKVKEYDSEFTTKTFPEKAQELFIAAHQCLTKFDRHELHTLVTERCYPEMVRGNRYRTIQWSFVESIEAPRVVQVRCPEMVSKGNLYAQVTVRMHNKQSLTIYDRFGRVMCGSEEPRDVLEYVVFERHMVNPYGTWRMHGKIVPSWAPPKEPIVKTVLLPGPAVDPLQELEDISLEKTEPVLQQWYK.

It belongs to the mitochondrion-specific ribosomal protein mL45 family. In terms of assembly, component of the mitochondrial ribosome large subunit (39S) which comprises a 16S rRNA and about 50 distinct proteins.

It localises to the mitochondrion. Functionally, component of the mitochondrial large ribosomal subunit (mt-LSU). Within the mitochondrial ribosomes, required to direct the nascent polypeptide toward the tunnel exit and position the exit at a distance from the membrane surface. The protein is Large ribosomal subunit protein mL45 (mrpl45) of Xenopus tropicalis (Western clawed frog).